We begin with the raw amino-acid sequence, 689 residues long: Glycine--tRNA ligase beta subunit (689 aa).

Belongs to the class-II aminoacyl-tRNA synthetase family. Tetramer of two alpha and two beta subunits.

The protein localises to the cytoplasm. The enzyme catalyses tRNA(Gly) + glycine + ATP = glycyl-tRNA(Gly) + AMP + diphosphate. This chain is Glycine--tRNA ligase beta subunit, found in Serratia proteamaculans (strain 568).